Reading from the N-terminus, the 423-residue chain is Adenosylmethionine-8-amino-7-oxononanoate aminotransferase (423 aa).

Trp-51 is a binding site for substrate. Gly-111–Ser-112 serves as a coordination point for pyridoxal 5'-phosphate. Tyr-144 contributes to the substrate binding site. Residue Asp-243 coordinates pyridoxal 5'-phosphate. Positions 272 and 306 each coordinate substrate. An N6-(pyridoxal phosphate)lysine modification is found at Lys-272. Pro-307–Thr-308 is a pyridoxal 5'-phosphate binding site. Arg-390 provides a ligand contact to substrate.

Belongs to the class-III pyridoxal-phosphate-dependent aminotransferase family. BioA subfamily. As to quaternary structure, homodimer. Pyridoxal 5'-phosphate is required as a cofactor.

It localises to the cytoplasm. The catalysed reaction is (8S)-8-amino-7-oxononanoate + S-adenosyl-L-methionine = S-adenosyl-4-methylsulfanyl-2-oxobutanoate + (7R,8S)-7,8-diammoniononanoate. Its pathway is cofactor biosynthesis; biotin biosynthesis; 7,8-diaminononanoate from 8-amino-7-oxononanoate (SAM route): step 1/1. Catalyzes the transfer of the alpha-amino group from S-adenosyl-L-methionine (SAM) to 7-keto-8-aminopelargonic acid (KAPA) to form 7,8-diaminopelargonic acid (DAPA). It is the only aminotransferase known to utilize SAM as an amino donor. This Corynebacterium glutamicum (strain ATCC 13032 / DSM 20300 / JCM 1318 / BCRC 11384 / CCUG 27702 / LMG 3730 / NBRC 12168 / NCIMB 10025 / NRRL B-2784 / 534) protein is Adenosylmethionine-8-amino-7-oxononanoate aminotransferase.